The sequence spans 595 residues: Isoprene synthase, chloroplastic (595 aa).

Residues 1–37 constitute a chloroplast transit peptide; that stretch reads MATELLCLHRPISLTHKLFRNPLPKVIQATPLTLKLR. Position 345 (D345) interacts with dimethylallyl diphosphate. 2 residues coordinate Mg(2+): D345 and D349. The DDXXD motif motif lies at 345–349; sequence DDIYD. Residues E423, R486, and N489 each contribute to the dimethylallyl diphosphate site. Residues N489, S493, and E497 each contribute to the Mg(2+) site.

Belongs to the terpene synthase family. Tpsb subfamily. In terms of assembly, homodimer. The cofactor is Mg(2+). Requires Mn(2+) as cofactor.

It localises to the plastid. The protein localises to the chloroplast. The enzyme catalyses dimethylallyl diphosphate = isoprene + diphosphate. It functions in the pathway secondary metabolite biosynthesis; terpenoid biosynthesis. Competitive inhibition is mediated by geranyl diphosphate (GPP). Its function is as follows. Lyase that catalyzes the formation of isoprene from dimethylallyl diphosphate via a syn-periplanar elimination mechanism in which the diphosphate-leaving group serves as a general base. In Populus canescens (Grey poplar), this protein is Isoprene synthase, chloroplastic.